The primary structure comprises 197 residues: Phosphoheptose isomerase (197 aa).

Residues 36-197 (LVHSLAQGGK…VDSLLLGVEE (162 aa)) enclose the SIS domain. 51-53 (NGG) contacts substrate. 2 residues coordinate Zn(2+): His-60 and Glu-64. Substrate contacts are provided by residues Glu-64, 93–94 (ND), 119–121 (STS), Ser-124, and Gln-174. Positions 174 and 182 each coordinate Zn(2+).

This sequence belongs to the SIS family. GmhA subfamily. Homotetramer. Zn(2+) is required as a cofactor.

The protein localises to the cytoplasm. It catalyses the reaction 2 D-sedoheptulose 7-phosphate = D-glycero-alpha-D-manno-heptose 7-phosphate + D-glycero-beta-D-manno-heptose 7-phosphate. It functions in the pathway carbohydrate biosynthesis; D-glycero-D-manno-heptose 7-phosphate biosynthesis; D-glycero-alpha-D-manno-heptose 7-phosphate and D-glycero-beta-D-manno-heptose 7-phosphate from sedoheptulose 7-phosphate: step 1/1. Catalyzes the isomerization of sedoheptulose 7-phosphate in D-glycero-D-manno-heptose 7-phosphate. The sequence is that of Phosphoheptose isomerase from Thiobacillus denitrificans (strain ATCC 25259 / T1).